Reading from the N-terminus, the 212-residue chain is Uridine kinase (212 aa).

13–20 (GGSGSGKT) serves as a coordination point for ATP.

Belongs to the uridine kinase family.

It is found in the cytoplasm. The enzyme catalyses uridine + ATP = UMP + ADP + H(+). It carries out the reaction cytidine + ATP = CMP + ADP + H(+). It participates in pyrimidine metabolism; CTP biosynthesis via salvage pathway; CTP from cytidine: step 1/3. Its pathway is pyrimidine metabolism; UMP biosynthesis via salvage pathway; UMP from uridine: step 1/1. This chain is Uridine kinase, found in Bacillus cereus (strain G9842).